The chain runs to 490 residues: Ribulose bisphosphate carboxylase large chain (490 aa).

The substrate site is built by N127 and T177. Catalysis depends on K179, which acts as the Proton acceptor. Residue K181 coordinates substrate. Residues K205, D207, and E208 each contribute to the Mg(2+) site. K205 bears the N6-carboxylysine mark. H297 functions as the Proton acceptor in the catalytic mechanism. The substrate site is built by R298, H330, and S382.

Belongs to the RuBisCO large chain family. Type I subfamily. Heterohexadecamer of 8 large chains and 8 small chains. Mg(2+) is required as a cofactor.

It is found in the plastid. It localises to the chloroplast. It carries out the reaction 2 (2R)-3-phosphoglycerate + 2 H(+) = D-ribulose 1,5-bisphosphate + CO2 + H2O. It catalyses the reaction D-ribulose 1,5-bisphosphate + O2 = 2-phosphoglycolate + (2R)-3-phosphoglycerate + 2 H(+). In terms of biological role, ruBisCO catalyzes two reactions: the carboxylation of D-ribulose 1,5-bisphosphate, the primary event in carbon dioxide fixation, as well as the oxidative fragmentation of the pentose substrate in the photorespiration process. Both reactions occur simultaneously and in competition at the same active site. This is Ribulose bisphosphate carboxylase large chain from Phaeodactylum tricornutum (strain CCAP 1055/1).